Consider the following 336-residue polypeptide: Putative transcription factor avaE (336 aa).

Residues 32-100 (TATRLNQTTF…VPLDQNESMP (69 aa)) constitute a DNA-binding region (WRKY).

It localises to the nucleus. It functions in the pathway secondary metabolite biosynthesis. In terms of biological role, putative transcription factor; part of the cluster that mediates the biosynthesis of a highly modified cyclo-arginine-tryptophan dipeptide (cRW). The sequence is that of Putative transcription factor avaE from Aspergillus versicolor.